Reading from the N-terminus, the 582-residue chain is Formate--tetrahydrofolate ligase (582 aa).

Residue 65 to 72 (TPLGEGKT) participates in ATP binding.

This sequence belongs to the formate--tetrahydrofolate ligase family.

The catalysed reaction is (6S)-5,6,7,8-tetrahydrofolate + formate + ATP = (6R)-10-formyltetrahydrofolate + ADP + phosphate. It participates in one-carbon metabolism; tetrahydrofolate interconversion. The protein is Formate--tetrahydrofolate ligase of Vibrio parahaemolyticus serotype O3:K6 (strain RIMD 2210633).